A 174-amino-acid chain; its full sequence is MQKEVVDSMAMKRALTRITYEIIEQNKGIKNVVLVGVKTRGVYIAQRIAAQLQQLEGTAIPVGELDITAFRDDQPLDQARLSTDYQLTFSVADKRVILVDDVLFTGRTIRAALDALMGGGRPQSIALAVLVDRGHRELPIRADFIGRNIPTARQERIKVTVNEIDGHDGIEIIN.

Residues 39–40 (TR), 100–108 (DDVLFTGRT), and R133 contribute to the substrate site. Residues 96–108 (VILVDDVLFTGRT) carry the PRPP-binding motif.

It belongs to the purine/pyrimidine phosphoribosyltransferase family. PyrR subfamily. Homodimer and homohexamer; in equilibrium.

It catalyses the reaction UMP + diphosphate = 5-phospho-alpha-D-ribose 1-diphosphate + uracil. In terms of biological role, regulates transcriptional attenuation of the pyrimidine nucleotide (pyr) operon by binding in a uridine-dependent manner to specific sites on pyr mRNA. This disrupts an antiterminator hairpin in the RNA and favors formation of a downstream transcription terminator, leading to a reduced expression of downstream genes. Also displays a weak uracil phosphoribosyltransferase activity which is not physiologically significant. The sequence is that of Bifunctional protein PyrR 2 (pyrR2) from Lactiplantibacillus plantarum (strain ATCC BAA-793 / NCIMB 8826 / WCFS1) (Lactobacillus plantarum).